The chain runs to 205 residues: Putative 3-methyladenine DNA glycosylase (205 aa).

The protein belongs to the DNA glycosylase MPG family.

The protein is Putative 3-methyladenine DNA glycosylase of Bacillus cereus (strain ZK / E33L).